Consider the following 276-residue polypeptide: NADPH-dependent 7-cyano-7-deazaguanine reductase (276 aa).

A substrate-binding site is contributed by 83-85 (IES). Residue 85-86 (SK) coordinates NADPH. The active-site Thioimide intermediate is the Cys184. The active-site Proton donor is the Asp191. Position 223–224 (223–224 (HE)) interacts with substrate. 252–253 (RG) lines the NADPH pocket.

Belongs to the GTP cyclohydrolase I family. QueF type 2 subfamily. As to quaternary structure, homodimer.

The protein localises to the cytoplasm. The enzyme catalyses 7-aminomethyl-7-carbaguanine + 2 NADP(+) = 7-cyano-7-deazaguanine + 2 NADPH + 3 H(+). The protein operates within tRNA modification; tRNA-queuosine biosynthesis. In terms of biological role, catalyzes the NADPH-dependent reduction of 7-cyano-7-deazaguanine (preQ0) to 7-aminomethyl-7-deazaguanine (preQ1). The sequence is that of NADPH-dependent 7-cyano-7-deazaguanine reductase from Pseudomonas syringae pv. tomato (strain ATCC BAA-871 / DC3000).